Consider the following 213-residue polypeptide: Na(+)-translocating NADH-quinone reductase subunit D (213 aa).

The next 6 membrane-spanning stretches (helical) occupy residues leucine 22–leucine 42, threonine 43–arginine 63, isoleucine 77–isoleucine 97, leucine 101–methionine 121, phenylalanine 131–isoleucine 151, and leucine 183–valine 203.

It belongs to the NqrDE/RnfAE family. As to quaternary structure, composed of six subunits; NqrA, NqrB, NqrC, NqrD, NqrE and NqrF.

The protein resides in the cell inner membrane. It catalyses the reaction a ubiquinone + n Na(+)(in) + NADH + H(+) = a ubiquinol + n Na(+)(out) + NAD(+). In terms of biological role, NQR complex catalyzes the reduction of ubiquinone-1 to ubiquinol by two successive reactions, coupled with the transport of Na(+) ions from the cytoplasm to the periplasm. NqrA to NqrE are probably involved in the second step, the conversion of ubisemiquinone to ubiquinol. This Chlamydia trachomatis serovar A (strain ATCC VR-571B / DSM 19440 / HAR-13) protein is Na(+)-translocating NADH-quinone reductase subunit D.